The following is a 424-amino-acid chain: MKHQWQQYQAILNAVVKPALGCTEPICAAYASAIAASMLTSEPESVSVHVSDNLYKNSMGVFVPGTGKIGLAIAAAVGAIGGNAEAGLEVLATIEADQVERAQAMIDAGNVSVSRTQTDEFIYCYVKAHSGDDVVTVEISGGHTQVVEKTLNGEIVFAKEVSATTSTAGICDGVDISIAGIYDYATQVSFEDIRFILDASELNTKLSAEGLANEYGLQVGRTIDKSIKDGFMSSDFANNILMHTAAASDARMGGASLPAMSNYGSGNQGIAATLPVVMTATHYQANDELLARALIMSHLGAIYIKSHYPPLSAFCGNTVTSAAAAMAMVYLAGGSYQQSCFAIQNVMSDCSGMVCDGAKSTCAMKVKTSTGSAVNAFMLAIQSTAAQAQGIVADDVEHTIRNIGQLVTLGMGNTDTTIIDIMSA.

It belongs to the UPF0597 family.

The chain is UPF0597 protein Ssed_2537 from Shewanella sediminis (strain HAW-EB3).